The following is a 248-amino-acid chain: 1-(5-phosphoribosyl)-5-[(5-phosphoribosylamino)methylideneamino] imidazole-4-carboxamide isomerase (248 aa).

Residue aspartate 17 is the Proton acceptor of the active site. Aspartate 136 functions as the Proton donor in the catalytic mechanism.

The protein belongs to the HisA/HisF family.

The protein localises to the cytoplasm. The enzyme catalyses 1-(5-phospho-beta-D-ribosyl)-5-[(5-phospho-beta-D-ribosylamino)methylideneamino]imidazole-4-carboxamide = 5-[(5-phospho-1-deoxy-D-ribulos-1-ylimino)methylamino]-1-(5-phospho-beta-D-ribosyl)imidazole-4-carboxamide. It functions in the pathway amino-acid biosynthesis; L-histidine biosynthesis; L-histidine from 5-phospho-alpha-D-ribose 1-diphosphate: step 4/9. This is 1-(5-phosphoribosyl)-5-[(5-phosphoribosylamino)methylideneamino] imidazole-4-carboxamide isomerase from Arthrobacter sp. (strain FB24).